The primary structure comprises 382 residues: Chaperone protein DnaJ (382 aa).

The region spanning 5–70 (DYYDLLGLSK…DKRAAYDRYG (66 aa)) is the J domain. The CR-type zinc-finger motif lies at 138 to 216 (GTKVPINYVT…CSGSGRVRDE (79 aa)). Zn(2+) contacts are provided by C151, C154, C168, C171, C190, C193, C204, and C207. CXXCXGXG motif repeat units follow at residues 151–158 (CSSCSGSG), 168–175 (CNTCHGAG), 190–197 (CHVCNGEG), and 204–211 (CKKCSGSG).

The protein belongs to the DnaJ family. In terms of assembly, homodimer. Requires Zn(2+) as cofactor.

It is found in the cytoplasm. Its function is as follows. Participates actively in the response to hyperosmotic and heat shock by preventing the aggregation of stress-denatured proteins and by disaggregating proteins, also in an autonomous, DnaK-independent fashion. Unfolded proteins bind initially to DnaJ; upon interaction with the DnaJ-bound protein, DnaK hydrolyzes its bound ATP, resulting in the formation of a stable complex. GrpE releases ADP from DnaK; ATP binding to DnaK triggers the release of the substrate protein, thus completing the reaction cycle. Several rounds of ATP-dependent interactions between DnaJ, DnaK and GrpE are required for fully efficient folding. Also involved, together with DnaK and GrpE, in the DNA replication of plasmids through activation of initiation proteins. The polypeptide is Chaperone protein DnaJ (Ehrlichia ruminantium (strain Gardel)).